Reading from the N-terminus, the 500-residue chain is Probable malate:quinone oxidoreductase (500 aa).

It belongs to the MQO family. FAD is required as a cofactor.

The catalysed reaction is (S)-malate + a quinone = a quinol + oxaloacetate. The protein operates within carbohydrate metabolism; tricarboxylic acid cycle; oxaloacetate from (S)-malate (quinone route): step 1/1. This Prochlorococcus marinus (strain MIT 9211) protein is Probable malate:quinone oxidoreductase.